The sequence spans 86 residues: Beta-mammal/insect toxin To1 (86 aa).

An N-terminal signal peptide occupies residues 1 to 20 (MTRFVLFISCFFLIDMIVEC). The region spanning 22–84 (KEGYLVGNDG…TWSSATNKCK (63 aa)) is the LCN-type CS-alpha/beta domain. Intrachain disulfides connect C32-C83, C36-C58, C44-C64, and C48-C66. K84 is subject to Lysine amide.

The protein belongs to the long (4 C-C) scorpion toxin superfamily. Sodium channel inhibitor family. Beta subfamily. As to expression, expressed by the venom gland.

It localises to the secreted. In terms of biological role, beta toxin that show multiple effects. It enhances the open probability at more negative potentials of human Nav1.3/SCN3A and Nav1.6/SCN8A, of the insect channel BgNaV1 and of arachnid VdNaV1 channel. It promotes an important shift in slow inactivation processes as a function of the prepulse voltage in human Nav1.3/SCN3A and Nav1.6/SCN8A and a small shift in Nav1.1/SCN1A, Nav1.2/SCN2A and Nav1.4/SCN4A. Finally, it reduces the peak of sodium currents in Nav1.3/SCN3A (80% inhibition at 70 nM of toxin), Nav1.6/SCN8A (55.3%), Nav1.1/SCN1A (53.3%), Nav1.5/SCN5A (46.7%), Nav1.2/SCN2A (42.7%) and Nav1.4/SCN4A (20%) voltage-gated sodium channels. It has also been shown to affect the sodium current permeability of rat cerebellum granular cells in a partially reversible manner. In vivo, an intraperitoneal injection (20 ug) into mice produces excitability, respiratory problems, convulsions and death, within the first 30 minutes after injection. In Tityus obscurus (Amazonian scorpion), this protein is Beta-mammal/insect toxin To1.